Consider the following 256-residue polypeptide: MAVGKNKRLSKGKKGLKKKAVDPFARKEWFDIKAPSTFENRNVGKTLINKSTGLKNAADGLKGRVFEVCLADLQGSEDHSYRKVKLRVDEVQGKNLLTNFHGLDFTSDKLRSLVRKWQSLVEANVTVKTADDYVLRVFAIAFTKRQANQVKKTTYAQSSKLREVRKKMIEIMQREVSNVTLAQLTSKLIPEVIGREIEKSTQSILPLQNIHIRKVKLLKQPKFDLGSLLALHGEGSTEEKGKKVSSGYKDVVLESV.

Alanine 2 is modified (N-acetylalanine; partial).

The protein belongs to the eukaryotic ribosomal protein eS1 family. In terms of assembly, component of the small ribosomal subunit. Mature ribosomes consist of a small (40S) and a large (60S) subunit. The 40S subunit contains about 33 different proteins and 1 molecule of RNA (18S). The 60S subunit contains about 49 different proteins and 3 molecules of RNA (25S, 5.8S and 5S).

It localises to the cytoplasm. The sequence is that of Small ribosomal subunit protein eS1B from Clavispora lusitaniae (strain ATCC 42720) (Yeast).